Here is a 206-residue protein sequence, read N- to C-terminus: Ribosomal RNA small subunit methyltransferase G (206 aa).

S-adenosyl-L-methionine is bound by residues Gly-74, Leu-79, 125–126 (VE), and Arg-140.

It belongs to the methyltransferase superfamily. RNA methyltransferase RsmG family.

It is found in the cytoplasm. The enzyme catalyses guanosine(527) in 16S rRNA + S-adenosyl-L-methionine = N(7)-methylguanosine(527) in 16S rRNA + S-adenosyl-L-homocysteine. In terms of biological role, specifically methylates the N7 position of guanine in position 527 of 16S rRNA. The polypeptide is Ribosomal RNA small subunit methyltransferase G (Shewanella oneidensis (strain ATCC 700550 / JCM 31522 / CIP 106686 / LMG 19005 / NCIMB 14063 / MR-1)).